A 925-amino-acid chain; its full sequence is Nonribosomal peptide synthetase apvA (925 aa).

The adenylation (A) domain stretch occupies residues 15 to 436; that stretch reads AREDSGHVVV…TGRAKENMII (422 aa). The region spanning 564 to 644 is the Carrier domain; the sequence is EPQNDLEKTL…DLATALEKLQ (81 aa). Ser601 carries the O-(pantetheine 4'-phosphoryl)serine modification. Residues 663–909 form a thioesterase (TE) domain region; the sequence is PLWLVHPGAG…HYSMIGPDHV (247 aa).

This sequence belongs to the NRP synthetase family. ApvA specifically produces aspulvinone E in hyphea, in contrast to melA which produces aspulvinone E in conidia where it is converted to UV-protective Asp-melanin.

The enzyme catalyses 2 3-(4-hydroxyphenyl)pyruvate + AH2 + 2 ATP + O2 = aspulvinone E + A + 2 AMP + CO2 + 2 diphosphate + H2O + H(+). It functions in the pathway secondary metabolite biosynthesis. Its function is as follows. Nonribosomal peptide synthetase; part of the gene cluster that mediates the biosynthesis of aspulvinones. The nonribosomal peptide synthetase apvA is responsible for the production of aspulvinone E, the core structure of aspulvinones. ApvA first activates 4-hydroxyphenylpyruvate (HPPA) through its A domain to AMP-HPPA. The HPPA unit is then loaded to the T domain and eventually transferred to the TE domain. Upon loading of another HPPA unit to the T domain, the TE domain promotes the enolate formation on the unit attached. The next step involves head to tail Claisen condensation, followed by the keto-enol tautermerization and a nucleophilic attack on the carbonyl carbon to yield the furanone partial structure. A spontaneous oxidation at the beta-carbon of the thioester might occur in aerobic condition. The TE domain then catalyzes the hydrolysis of the thioester, followed by spontaneous decarboxylation, dehydroxylation and keto-enol tautermerization to give the aspulvinone core. Aspulvinone E is highly unstable and converted to isoaspulvinone E in the presence of light. The structural diversity of the aspulvinones suggests that other tailoring enzymes are involved and have still to be identified. The sequence is that of Nonribosomal peptide synthetase apvA from Aspergillus terreus (strain NIH 2624 / FGSC A1156).